A 188-amino-acid chain; its full sequence is E3 ubiquitin-protein ligase RNF183 (188 aa).

Topologically, residues 1–157 (MAEQQGREPE…RECFRNPHFR (157 aa)) are cytoplasmic. The RING-type zinc finger occupies 11 to 58 (CPVCWNPFNNTFHTPKVLDCCHSFCVECLAHISLVTPTRRRLLCPLCR). A helical; Anchor for type IV membrane protein membrane pass occupies residues 158 to 178 (IFAYMMAVILCGTVLFIFSIF). Residues 179 to 188 (CTRRFFWGVG) are Lumenal-facing.

As to quaternary structure, interacts with FATE1. Interacts with SEC16A. Interacts with BCL2L1. Autoubiquitinated (in vitro).

The protein resides in the endoplasmic reticulum membrane. The protein localises to the endoplasmic reticulum. It localises to the golgi apparatus. Its subcellular location is the cis-Golgi network membrane. It is found in the lysosome. It catalyses the reaction S-ubiquitinyl-[E2 ubiquitin-conjugating enzyme]-L-cysteine + [acceptor protein]-L-lysine = [E2 ubiquitin-conjugating enzyme]-L-cysteine + N(6)-ubiquitinyl-[acceptor protein]-L-lysine.. The protein operates within protein modification; protein ubiquitination. Functionally, acts as an E3 ubiquitin ligase catalyzing the covalent attachment of ubiquitin moieties onto substrate proteins. Triggers apoptosis in response to prolonged ER stress by mediating the polyubiquitination and subsequent proteasomal degradation of BCL2L1. May collaborate with FATE1 to restrain BIK protein levels thus regulating apoptotic signaling. The sequence is that of E3 ubiquitin-protein ligase RNF183 (RNF183) from Bos taurus (Bovine).